The following is a 326-amino-acid chain: Endo-beta-1,4-glucanase A (326 aa).

An N-terminal signal peptide occupies residues 1-19 (MRSLVLLSSVLALVAPSKG). Glutamate 150 serves as the catalytic Proton donor. The active-site Nucleophile is glutamate 257.

It belongs to the glycosyl hydrolase 5 (cellulase A) family.

The protein resides in the secreted. It carries out the reaction Endohydrolysis of (1-&gt;4)-beta-D-glucosidic linkages in cellulose, lichenin and cereal beta-D-glucans.. Has endoglucanase activity on substrates containing beta-1,4 glycosidic bonds, like in carboxymethylcellulose (CMC), hydroxyethylcellulose (HEC) and beta-glucan. Involved in the degradation of complex natural cellulosic substrates. This chain is Endo-beta-1,4-glucanase A (eglA), found in Emericella nidulans (strain FGSC A4 / ATCC 38163 / CBS 112.46 / NRRL 194 / M139) (Aspergillus nidulans).